We begin with the raw amino-acid sequence, 264 residues long: Virulence plasmid ParA family protein pGP5-D (264 aa).

Residue 9 to 16 (FKGGTGKT) participates in ATP binding.

The protein belongs to the ParA family.

Required for growth within mammalian cells. The sequence is that of Virulence plasmid ParA family protein pGP5-D from Chlamydia trachomatis.